The primary structure comprises 158 residues: 2-C-methyl-D-erythritol 2,4-cyclodiphosphate synthase (158 aa).

A divalent metal cation-binding residues include aspartate 10 and histidine 12. 4-CDP-2-C-methyl-D-erythritol 2-phosphate is bound by residues 10–12 and 36–37; these read DVH and HS. Position 44 (histidine 44) interacts with a divalent metal cation. 4-CDP-2-C-methyl-D-erythritol 2-phosphate-binding positions include 58 to 60, 63 to 67, and arginine 144; these read DIG and FSDTD.

Belongs to the IspF family. As to quaternary structure, homotrimer. Requires a divalent metal cation as cofactor.

It catalyses the reaction 4-CDP-2-C-methyl-D-erythritol 2-phosphate = 2-C-methyl-D-erythritol 2,4-cyclic diphosphate + CMP. It functions in the pathway isoprenoid biosynthesis; isopentenyl diphosphate biosynthesis via DXP pathway; isopentenyl diphosphate from 1-deoxy-D-xylulose 5-phosphate: step 4/6. Involved in the biosynthesis of isopentenyl diphosphate (IPP) and dimethylallyl diphosphate (DMAPP), two major building blocks of isoprenoid compounds. Catalyzes the conversion of 4-diphosphocytidyl-2-C-methyl-D-erythritol 2-phosphate (CDP-ME2P) to 2-C-methyl-D-erythritol 2,4-cyclodiphosphate (ME-CPP) with a corresponding release of cytidine 5-monophosphate (CMP). In Burkholderia vietnamiensis (strain G4 / LMG 22486) (Burkholderia cepacia (strain R1808)), this protein is 2-C-methyl-D-erythritol 2,4-cyclodiphosphate synthase.